Consider the following 641-residue polypeptide: MKIVDLIDKIPNGNAFYSFEYFPPKTTVGLENLSSRITRMSRNMMPLFSSVTWGTAGSTAEVSIYLAKMLEQHHKIPACLHLTCTNVDKAIIDKALETAKEYGIRNILALRGDPPLNSDHWEGKVSEFEHAVDLVRYIREKYGDYFCIGVAAYPEGHVDSNVPELSKDPLRDIPFLIEKVEAGADFIITQIFYEPEAFIKFENFVRNHSSNALRNIPIIPAIMPIQSYGSLKRMTRLCGCSVPSSLMQRLNAAKPDDEAIKNIGVEHIVDMIKKIMDNVQGRVHGFHFCTLNLERSVALILKNSGLLTKRWKQVESEMEDEKLLRTTRKRLSLDEPAELHNQVVVPSQQPVADKSSNLFVTSKQSSVSGHKDNLTEEAPFSVSEGSGVLGRQANWDDFTNGRFGDPRSPAYGEIDGYGPTLHFPPSEALKLWGYPVDESDITSLFQKHIMSDISAIPWIDEPVEVETKTIAKYLLKLNGNSWWTVGSQPAVNGAPSADPVFGWGPKGGRVFQKAFVECFVNGKDLKDFITKWHDNPQVTYYAGNNKSEFLTNAPKDGASAVTWGVYPGREIIQSTIIAEVSFKAWLSESFQVWGEWANLYSKNTPSRKLLENCINDRWLVTVIHHDFMDKNGLWKVLEIDF.

E20 acts as the Proton donor/acceptor in catalysis. NAD(+)-binding positions include 20–25 (EYFPPK) and 52–53 (TW). FAD-binding positions include 52–53 (TW), H81, 111–113 (RGD), Y153, D172, and K179. A substrate-binding site is contributed by D113. Substrate is bound at residue Q190.

Belongs to the methylenetetrahydrofolate reductase family. Requires FAD as cofactor.

It catalyses the reaction (6S)-5-methyl-5,6,7,8-tetrahydrofolate + NADP(+) = (6R)-5,10-methylene-5,6,7,8-tetrahydrofolate + NADPH + H(+). It participates in one-carbon metabolism; tetrahydrofolate interconversion. Functionally, major methylenetetrahydrofolate reductase required to generate the methyl groups necessary for methionine synthetase to convert homocysteine to methionine. Performs 15 to 20 percent of the total methylenetetrahydrofolate reductase activity of the cells. This chain is Methylenetetrahydrofolate reductase 2 (met11), found in Schizosaccharomyces pombe (strain 972 / ATCC 24843) (Fission yeast).